We begin with the raw amino-acid sequence, 679 residues long: MGQEDQEVLIRGGKATSTSAESLNNNNEQPYEQSSINQGFCKNYGTLSPPSPALTADNLTYSWYNLDVFGAVHQPGSSWKQLVNRVKGVFCNERHIPAPRKHLLKNDSGVAYPGELLAVMGSSGAGKTTLLNASAFRSSKGVQISPSTIRMLNGHPVDAKEMQARCAYVQQDDLFIGSLTAREHLIFQAMVRMPRHMTQKQKVQRVDQVIQDLSLGKCQNTLIGVPGRVKGLSGGERKRLAFASEALTDPPLLICDEPTSGLDSFMAHSVVQVLKKLSQKGKTVILTIHQPSSELFELFDKILLMAEGRVAFLGTPGEAVDFFSYIGATCPTNYTPADFYVQVLAVVPGREVESRDRVAKICDNFAVGKVSREMEQNFQKLVKSNGFGKEDENEYTYKASWFMQFRAVLWRSWLSVLKEPLLVKVRLLQTTMVAVLIGLIFLGQQLTQVGVMNINGAIFLFLTNMTFQNSFATITVFTTELPVFMRETRSRLYRCDTYFLGKTIAELPLFLVVPFLFTAIAYPLIGLRPGVDHFFTALALVTLVANVSTSFGYLISCACSSTSMALSVGPPVIIPFLLFGGFFLNSGSVPVYFKWLSYLSWFRYANEGLLINQWADVKPGEITCTLSNTTCPSSGEVILETLNFSASDLPFDFIGLALLIVGFRISAYIALTMRARRKE.

Residues 1-34 form a disordered region; it reads MGQEDQEVLIRGGKATSTSAESLNNNNEQPYEQS. The span at 15-34 shows a compositional bias: polar residues; sequence ATSTSAESLNNNNEQPYEQS. The ABC transporter domain maps to 84-332; that stretch reads NRVKGVFCNE…FSYIGATCPT (249 aa). 121–128 provides a ligand contact to ATP; it reads GSSGAGKT. 5 helical membrane passes run 427 to 445, 457 to 477, 507 to 525, 534 to 555, and 568 to 586; these read LLQT…LGQQ, AIFL…ITVF, LPLF…YPLI, FFTA…GYLI, and VGPP…FLNS. Residues N628 and N643 are each glycosylated (N-linked (GlcNAc...) asparagine). A helical membrane pass occupies residues 651–670; sequence FDFIGLALLIVGFRISAYIA.

This sequence belongs to the ABC transporter superfamily. ABCG family. Eye pigment precursor importer (TC 3.A.1.204) subfamily.

It localises to the membrane. Its function is as follows. May be part of a membrane-spanning permease system necessary for the transport of pigment precursors into pigment cells responsible for eye color. This is Protein white (W) from Ceratitis capitata (Mediterranean fruit fly).